Consider the following 272-residue polypeptide: uncharacterized protein (272 aa).

The disordered stretch occupies residues 101 to 130; sequence CPTGKKNKAPSSLIPKISKTSTSSLTKEDE. The segment covering 110–125 has biased composition (low complexity); the sequence is PSSLIPKISKTSTSSL. Serine 142 carries the post-translational modification Phosphoserine.

This is an uncharacterized protein from Arabidopsis thaliana (Mouse-ear cress).